The primary structure comprises 1050 residues: Nuclear pore complex-interacting protein family member B3 (1050 aa).

Residues 63-87 (VIIAFPTSYKVVITLWIVYLWVSLL) traverse the membrane as a helical segment. Disordered regions lie at residues 241-262 (NRMG…NSLS), 290-574 (LTPL…NIKT), and 785-1050 (ERLR…RRLS). Over residues 252-262 (QQHSITDNSLS) the composition is skewed to polar residues. A compositionally biased stretch (pro residues) spans 349-359 (PLPPSALPSAP). 7 stretches are compositionally biased toward basic and acidic residues: residues 406–416 (DNIKTPAERLR), 448–458 (DNIKTPAERLR), 490–500 (DNIKTPAERLR), 528–538 (DNIKTPAERLR), 820–830 (DNIKTPAERLR), 862–872 (DNIKTPAERLR), and 904–914 (DNIKTPAERLR).

This sequence belongs to the NPIP family.

The protein localises to the membrane. The chain is Nuclear pore complex-interacting protein family member B3 (NPIPB3) from Homo sapiens (Human).